Reading from the N-terminus, the 987-residue chain is Ephrin type-B receptor 4 (987 aa).

The N-terminal stretch at 1–15 is a signal peptide; sequence MELRVLLCWASLAAA. Topologically, residues 16–539 are extracellular; that stretch reads LEETLLNTKL…ESEGWREQLA (524 aa). Residues 17 to 202 enclose the Eph LBD domain; that stretch reads EETLLNTKLE…FYKKCAQLTV (186 aa). Intrachain disulfides connect Cys-61-Cys-184 and Cys-97-Cys-107. N-linked (GlcNAc...) asparagine glycosylation is found at Asn-203, Asn-335, and Asn-426. 2 Fibronectin type-III domains span residues 323–432 and 436–529; these read PPSA…TDRE and AVSD…TQLD. Residues 540-560 traverse the membrane as a helical segment; sequence LIAGTAVVGVVLVLVVIVVAV. Residues 561 to 987 are Cytoplasmic-facing; sequence LCLRKQSNGR…GGTGGPAPQY (427 aa). The region spanning 615-899 is the Protein kinase domain; that stretch reads VKIEEVIGAG…ENGGASHPLL (285 aa). Residues 621 to 629 and Lys-647 contribute to the ATP site; that span reads IGAGEFGEV. Asp-740 serves as the catalytic Proton acceptor. Phosphoserine occurs at positions 769, 770, 911, and 943. Residues 907–971 enclose the SAM domain; the sequence is SAFGSVGEWL…LASVQHMKSQ (65 aa). The tract at residues 965 to 987 is disordered; that stretch reads VQHMKSQAKPGTPGGTGGPAPQY. Thr-976 carries the phosphothreonine modification. The span at 976-987 shows a compositional bias: gly residues; sequence TPGGTGGPAPQY. The PDZ-binding signature appears at 985 to 987; that stretch reads PQY. Phosphotyrosine is present on Tyr-987.

Belongs to the protein kinase superfamily. Tyr protein kinase family. Ephrin receptor subfamily. In terms of assembly, heterotetramer upon binding of the ligand. The heterotetramer is composed of an ephrin dimer and a receptor dimer. Oligomerization is probably required to induce biological responses. Interacts with RASA1; the interaction depends on EPHB4 tyrosine-phosphorylation. Post-translationally, phosphorylated; autophosphorylation is stimulated by EFNB2. Abundantly expressed in placenta but also detected in kidney, liver, lung, pancreas, skeletal muscle and heart. Expressed in primitive and myeloid, but not lymphoid, hematopoietic cells. Also observed in cell lines derived from liver, breast, colon, lung, melanocyte and cervix.

The protein localises to the cell membrane. The catalysed reaction is L-tyrosyl-[protein] + ATP = O-phospho-L-tyrosyl-[protein] + ADP + H(+). In terms of biological role, receptor tyrosine kinase which binds promiscuously transmembrane ephrin-B family ligands residing on adjacent cells, leading to contact-dependent bidirectional signaling into neighboring cells. The signaling pathway downstream of the receptor is referred to as forward signaling while the signaling pathway downstream of the ephrin ligand is referred to as reverse signaling. Together with its cognate ligand/functional ligand EFNB2 it is involved in the regulation of cell adhesion and migration, and plays a central role in heart morphogenesis, angiogenesis and blood vessel remodeling and permeability. EPHB4-mediated forward signaling controls cellular repulsion and segregation from EFNB2-expressing cells. This is Ephrin type-B receptor 4 (EPHB4) from Homo sapiens (Human).